The chain runs to 331 residues: Protein RecA (331 aa).

G66–T73 serves as a coordination point for ATP.

The protein belongs to the RecA family.

Its subcellular location is the cytoplasm. Functionally, can catalyze the hydrolysis of ATP in the presence of single-stranded DNA, the ATP-dependent uptake of single-stranded DNA by duplex DNA, and the ATP-dependent hybridization of homologous single-stranded DNAs. It interacts with LexA causing its activation and leading to its autocatalytic cleavage. The polypeptide is Protein RecA (Acholeplasma laidlawii (strain PG-8A)).